Consider the following 259-residue polypeptide: Thiazole synthase (259 aa).

The active-site Schiff-base intermediate with DXP is the Lys-100. Residues Gly-161, 187 to 188, and 209 to 210 each bind 1-deoxy-D-xylulose 5-phosphate; these read AG and NT.

This sequence belongs to the ThiG family. As to quaternary structure, homotetramer. Forms heterodimers with either ThiH or ThiS.

It is found in the cytoplasm. The catalysed reaction is [ThiS sulfur-carrier protein]-C-terminal-Gly-aminoethanethioate + 2-iminoacetate + 1-deoxy-D-xylulose 5-phosphate = [ThiS sulfur-carrier protein]-C-terminal Gly-Gly + 2-[(2R,5Z)-2-carboxy-4-methylthiazol-5(2H)-ylidene]ethyl phosphate + 2 H2O + H(+). It participates in cofactor biosynthesis; thiamine diphosphate biosynthesis. Catalyzes the rearrangement of 1-deoxy-D-xylulose 5-phosphate (DXP) to produce the thiazole phosphate moiety of thiamine. Sulfur is provided by the thiocarboxylate moiety of the carrier protein ThiS. In vitro, sulfur can be provided by H(2)S. The sequence is that of Thiazole synthase from Methylobacillus flagellatus (strain ATCC 51484 / DSM 6875 / VKM B-1610 / KT).